The chain runs to 84 residues: Small ribosomal subunit protein uS17 (84 aa).

Belongs to the universal ribosomal protein uS17 family. As to quaternary structure, part of the 30S ribosomal subunit.

Functionally, one of the primary rRNA binding proteins, it binds specifically to the 5'-end of 16S ribosomal RNA. The chain is Small ribosomal subunit protein uS17 from Borrelia hermsii (strain HS1 / DAH).